The sequence spans 307 residues: Acyl transferase (307 aa).

Catalysis depends on charge relay system residues S116, D213, and H243.

It belongs to the LuxD family.

It functions in the pathway lipid metabolism; fatty acid reduction for biolumincescence. Functionally, acyl transferase is part of the fatty acid reductase system required for aldehyde biosynthesis; it produces fatty acids for the luminescent reaction. The polypeptide is Acyl transferase (Photorhabdus luminescens (Xenorhabdus luminescens)).